Here is a 120-residue protein sequence, read N- to C-terminus: Large ribosomal subunit protein uL22 (120 aa).

This sequence belongs to the universal ribosomal protein uL22 family. In terms of assembly, part of the 50S ribosomal subunit.

In terms of biological role, this protein binds specifically to 23S rRNA; its binding is stimulated by other ribosomal proteins, e.g. L4, L17, and L20. It is important during the early stages of 50S assembly. It makes multiple contacts with different domains of the 23S rRNA in the assembled 50S subunit and ribosome. Its function is as follows. The globular domain of the protein is located near the polypeptide exit tunnel on the outside of the subunit, while an extended beta-hairpin is found that lines the wall of the exit tunnel in the center of the 70S ribosome. The protein is Large ribosomal subunit protein uL22 of Borreliella afzelii (strain PKo) (Borrelia afzelii).